The sequence spans 238 residues: Ribonuclease PH (238 aa).

Phosphate-binding positions include R86 and 124–126; that span reads GTR.

Belongs to the RNase PH family. As to quaternary structure, homohexameric ring arranged as a trimer of dimers.

The catalysed reaction is tRNA(n+1) + phosphate = tRNA(n) + a ribonucleoside 5'-diphosphate. Its function is as follows. Phosphorolytic 3'-5' exoribonuclease that plays an important role in tRNA 3'-end maturation. Removes nucleotide residues following the 3'-CCA terminus of tRNAs; can also add nucleotides to the ends of RNA molecules by using nucleoside diphosphates as substrates, but this may not be physiologically important. Probably plays a role in initiation of 16S rRNA degradation (leading to ribosome degradation) during starvation. The sequence is that of Ribonuclease PH from Nitrosospira multiformis (strain ATCC 25196 / NCIMB 11849 / C 71).